A 280-amino-acid polypeptide reads, in one-letter code: Formyltetrahydrofolate deformylase (280 aa).

An ACT domain is found at 8-86 (VLRTICPDQK…RELNPAGRRR (79 aa)). Residue Asp225 is part of the active site.

This sequence belongs to the PurU family.

It carries out the reaction (6R)-10-formyltetrahydrofolate + H2O = (6S)-5,6,7,8-tetrahydrofolate + formate + H(+). Its pathway is purine metabolism; IMP biosynthesis via de novo pathway; formate from 10-formyl-5,6,7,8-tetrahydrofolate: step 1/1. In terms of biological role, catalyzes the hydrolysis of 10-formyltetrahydrofolate (formyl-FH4) to formate and tetrahydrofolate (FH4). This chain is Formyltetrahydrofolate deformylase, found in Escherichia coli O6:H1 (strain CFT073 / ATCC 700928 / UPEC).